The sequence spans 188 residues: Threonylcarbamoyl-AMP synthase (188 aa).

The region spanning 3–188 (QLHPSDIKDI…RSGKILRNGQ (186 aa)) is the YrdC-like domain.

It belongs to the SUA5 family. TsaC subfamily.

The protein resides in the cytoplasm. The catalysed reaction is L-threonine + hydrogencarbonate + ATP = L-threonylcarbamoyladenylate + diphosphate + H2O. Functionally, required for the formation of a threonylcarbamoyl group on adenosine at position 37 (t(6)A37) in tRNAs that read codons beginning with adenine. Catalyzes the conversion of L-threonine, HCO(3)(-)/CO(2) and ATP to give threonylcarbamoyl-AMP (TC-AMP) as the acyladenylate intermediate, with the release of diphosphate. The protein is Threonylcarbamoyl-AMP synthase of Shewanella putrefaciens (strain CN-32 / ATCC BAA-453).